The chain runs to 225 residues: Uracil-DNA glycosylase (225 aa).

Catalysis depends on D68, which acts as the Proton acceptor.

Belongs to the uracil-DNA glycosylase (UDG) superfamily. UNG family.

Its subcellular location is the cytoplasm. It catalyses the reaction Hydrolyzes single-stranded DNA or mismatched double-stranded DNA and polynucleotides, releasing free uracil.. Functionally, excises uracil residues from the DNA which can arise as a result of misincorporation of dUMP residues by DNA polymerase or due to deamination of cytosine. The protein is Uracil-DNA glycosylase of Parafrankia sp. (strain EAN1pec).